A 250-amino-acid polypeptide reads, in one-letter code: Probable transcriptional regulatory protein Cag_0165 (250 aa).

It belongs to the TACO1 family.

It is found in the cytoplasm. The chain is Probable transcriptional regulatory protein Cag_0165 from Chlorobium chlorochromatii (strain CaD3).